The chain runs to 866 residues: Probable LRR receptor-like serine/threonine-protein kinase At5g16900 (866 aa).

A signal peptide spans M1–A20. Over Q21–V515 the chain is Extracellular. N-linked (GlcNAc...) asparagine glycans are attached at residues N137, N176, N230, N251, N331, N404, N409, and N436. LRR repeat units follow at residues R415–T438, Q439–M461, and S463–R485. N-linked (GlcNAc...) asparagine glycans are attached at residues N468 and N505. A helical membrane pass occupies residues I516–F536. At I537–S866 the chain is on the cytoplasmic side. Residue T564 is modified to Phosphothreonine. Residues N573–I846 enclose the Protein kinase domain. Residues I579–V587 and K601 contribute to the ATP site. Y646 is modified (phosphotyrosine). The active-site Proton acceptor is D698. S732 carries the phosphoserine modification. Residues T733 and T738 each carry the phosphothreonine modification. Y746 is subject to Phosphotyrosine.

Belongs to the protein kinase superfamily. Ser/Thr protein kinase family.

It is found in the membrane. The catalysed reaction is L-seryl-[protein] + ATP = O-phospho-L-seryl-[protein] + ADP + H(+). The enzyme catalyses L-threonyl-[protein] + ATP = O-phospho-L-threonyl-[protein] + ADP + H(+). The sequence is that of Probable LRR receptor-like serine/threonine-protein kinase At5g16900 from Arabidopsis thaliana (Mouse-ear cress).